Reading from the N-terminus, the 301-residue chain is Tyrosine recombinase XerC (301 aa).

One can recognise a Core-binding (CB) domain in the interval 1–85; sequence MELISLFKQY…ALRSFYRFLV (85 aa). In terms of domain architecture, Tyr recombinase spans 106 to 292; it reads KLPHFFYEKE…TKEKLQESYR (187 aa). Residues arginine 147, lysine 171, histidine 244, arginine 247, and histidine 270 contribute to the active site. The active-site O-(3'-phospho-DNA)-tyrosine intermediate is the tyrosine 279.

The protein belongs to the 'phage' integrase family. XerC subfamily. As to quaternary structure, forms a cyclic heterotetrameric complex composed of two molecules of XerC and two molecules of XerD.

The protein localises to the cytoplasm. In terms of biological role, site-specific tyrosine recombinase, which acts by catalyzing the cutting and rejoining of the recombining DNA molecules. The XerC-XerD complex is essential to convert dimers of the bacterial chromosome into monomers to permit their segregation at cell division. It also contributes to the segregational stability of plasmids. The chain is Tyrosine recombinase XerC from Pediococcus pentosaceus (strain ATCC 25745 / CCUG 21536 / LMG 10740 / 183-1w).